The primary structure comprises 117 residues: Large ribosomal subunit protein uL18 (117 aa).

Belongs to the universal ribosomal protein uL18 family. As to quaternary structure, part of the 50S ribosomal subunit; part of the 5S rRNA/L5/L18/L25 subcomplex. Contacts the 5S and 23S rRNAs.

Functionally, this is one of the proteins that bind and probably mediate the attachment of the 5S RNA into the large ribosomal subunit, where it forms part of the central protuberance. This chain is Large ribosomal subunit protein uL18, found in Idiomarina loihiensis (strain ATCC BAA-735 / DSM 15497 / L2-TR).